The sequence spans 371 residues: Putative glutamate--cysteine ligase 2 (371 aa).

Belongs to the glutamate--cysteine ligase type 2 family. YbdK subfamily.

The catalysed reaction is L-cysteine + L-glutamate + ATP = gamma-L-glutamyl-L-cysteine + ADP + phosphate + H(+). In terms of biological role, ATP-dependent carboxylate-amine ligase which exhibits weak glutamate--cysteine ligase activity. This chain is Putative glutamate--cysteine ligase 2, found in Nitrosospira multiformis (strain ATCC 25196 / NCIMB 11849 / C 71).